The sequence spans 481 residues: MIQVLLVTICLAVFPYQGSSIILESGNVDDYEVVYPRKVTALPKGAVQPKYEDAMQYEFKVNGEAVVLHLEKNKGLFSEDYSETHYSPDGREITTYPSVEDHCYYHGRIHNDADSTASISACDGLKGYFKLQGETYLIEPLELSDSEAHAVFKYENVEKEDEAPKMCGVTQNWESDESIKKASQLYLTPEQQRFPQRYIKLAIVVDHGMYTKYSSNFKKIRKRVHQMVSNINEMCRPLNIAITLALLDVWSEKDFITVQADAPTTAGLFGDWRERVLLKKKNHDHAQLLTDTNFARNTIGWAYLGRMCDEKYSVGVVQDHSSKVFMVAVTMTHELGHNLGMEHDDKDKCKCEACIMSAVISDKQSKLFSDCSKDYYQTFLTNDNPQCILNAPLRTDTVSTPVSGNEFLEAGEECDCGSPENPCCDAATCKLRPGAQCADGLCCDQCRFIEEGIICRRARGDDLDDYCNGISGDCPRNPFHA.

The signal sequence occupies residues Met1–Ser20. A propeptide spanning residues Ile21–Glu190 is cleaved from the precursor. The 196-residue stretch at Arg197–Pro392 folds into the Peptidase M12B domain. Cystine bridges form between Cys308/Cys387, Cys349/Cys371, and Cys351/Cys354. His333 lines the Zn(2+) pocket. Residue Glu334 is part of the active site. Residues His337 and His343 each contribute to the Zn(2+) site. A propeptide spanning residues Leu393–Leu408 is cleaved from the precursor. The 82-residue stretch at Thr400–Ala481 folds into the Disintegrin domain. Intrachain disulfides connect Cys414–Cys429, Cys416–Cys424, Cys423–Cys446, Cys437–Cys443, Cys442–Cys467, and Cys455–Cys474. Residues Arg459–Asp461 carry the Cell attachment site motif.

This sequence belongs to the venom metalloproteinase (M12B) family. P-II subfamily. P-IIa sub-subfamily. Monomer. Zn(2+) serves as cofactor. As to expression, expressed by the venom gland.

The protein resides in the secreted. Impairs hemostasis in the envenomed animal. Functionally, disintegrin elegantin-2a-f: inhibits platelet aggregation induced by ADP, thrombin, platelet-activating factor and collagen. Acts by inhibiting fibrinogen interaction with platelet receptors GPIIb/GPIIIa (ITGA2B/ITGB3). In Protobothrops elegans (Elegant pitviper), this protein is Zinc metalloproteinase/disintegrin.